The primary structure comprises 108 residues: Protein U4 (108 aa).

Residues 5-25 (FLLFSLLFVVFLQPALVFNMV) form a helical membrane-spanning segment.

Belongs to the nanovirus U4 protein family.

Its subcellular location is the membrane. The sequence is that of Protein U4 (DNA-U4) from Astragalus sinicus (Chinese milk vetch).